A 367-amino-acid polypeptide reads, in one-letter code: MDAKLSPNQGLNISGIGLASSLAAGLGIAALTLDWIANRNPWQGTSLTLPLLLCTIASAIAGYFVVPLLQALKTGQIIREDGPQAHLKKAGTPTMGGIFFIPVAVVGACVLSNFATEVLAVSALTLSYGLIGWIDDWQILRRKSNKGISPRMKLALQICFAAAFCLWLMFNQPANITSIALPWVSFALPLGFLFWPLAGFVLVAESNATNLTDGIDGLAGGTVAIALLALGAIVAPTSPALMVFCAALSGSCLGFLAHNRNPARVFMGDTGSLALGGALAAVALLTNSLVALFILSGIFFVETLSVMAQVSYYKATKGPDGKGKRLLKMAPLHHHLELSGWSELQVVSSFYVIATILAVICLAIAPF.

10 consecutive transmembrane segments (helical) span residues 13-33 (ISGI…ALTL), 49-69 (LPLL…VPLL), 95-115 (MGGI…SNFA), 119-139 (LAVS…DWQI), 154-174 (LALQ…NQPA), 183-203 (WVSF…FVLV), 215-235 (IDGL…AIVA), 237-257 (TSPA…GFLA), 281-301 (AVAL…IFFV), and 347-367 (VSSF…IAPF).

It belongs to the glycosyltransferase 4 family. MraY subfamily. Requires Mg(2+) as cofactor.

Its subcellular location is the cell inner membrane. The enzyme catalyses UDP-N-acetyl-alpha-D-muramoyl-L-alanyl-gamma-D-glutamyl-meso-2,6-diaminopimeloyl-D-alanyl-D-alanine + di-trans,octa-cis-undecaprenyl phosphate = di-trans,octa-cis-undecaprenyl diphospho-N-acetyl-alpha-D-muramoyl-L-alanyl-D-glutamyl-meso-2,6-diaminopimeloyl-D-alanyl-D-alanine + UMP. It functions in the pathway cell wall biogenesis; peptidoglycan biosynthesis. Functionally, catalyzes the initial step of the lipid cycle reactions in the biosynthesis of the cell wall peptidoglycan: transfers peptidoglycan precursor phospho-MurNAc-pentapeptide from UDP-MurNAc-pentapeptide onto the lipid carrier undecaprenyl phosphate, yielding undecaprenyl-pyrophosphoryl-MurNAc-pentapeptide, known as lipid I. The sequence is that of Phospho-N-acetylmuramoyl-pentapeptide-transferase from Trichormus variabilis (strain ATCC 29413 / PCC 7937) (Anabaena variabilis).